A 382-amino-acid chain; its full sequence is MKALHFGAGNIGRGFIGKLLADAGIQLTFADVNQVVLDALNARHSYQVHVVGETEQVDTVSGVNAVSSIGDDVVDLIAQVDLVTTAVGPVVLERIAPAIAKGQVKRKEQGNESPLNIIACENMVRGTTQLKGHVMNALPEDAKAWVEEHVGFVDSAVDRIVPPSASATNDPLEVTVETFSEWIVDKTQFKGALPNIPGMELTDNLMAFVERKLFTLNTGHAITAYLGKLAGHQTIRDAILDEKIRAVVKGAMEESGAVLIKRYGFDADKHAAYIQKILGRFENPYLKDDVERVGRQPLRKLSAGDRLIKPLLGTLEYGLPHKNLIEGIAAAMHFRSEDDPQAQELAALIADKGPQAALAQISGLDANSEVVSEAVTAYKAMQ.

Position 3-14 (3-14) interacts with NAD(+); sequence ALHFGAGNIGRG. N6-acetyllysine is present on Lys-269.

The protein belongs to the mannitol dehydrogenase family.

It carries out the reaction D-mannitol 1-phosphate + NAD(+) = beta-D-fructose 6-phosphate + NADH + H(+). In Escherichia coli (strain K12 / MC4100 / BW2952), this protein is Mannitol-1-phosphate 5-dehydrogenase.